The following is a 198-amino-acid chain: Ribonuclease HII (198 aa).

One can recognise an RNase H type-2 domain in the interval 5–195; it reads LRVAGVDEAG…VKAWLASHQG (191 aa). Asp11, Glu12, and Asp103 together coordinate a divalent metal cation.

It belongs to the RNase HII family. Mn(2+) is required as a cofactor. The cofactor is Mg(2+).

Its subcellular location is the cytoplasm. The enzyme catalyses Endonucleolytic cleavage to 5'-phosphomonoester.. Functionally, endonuclease that specifically degrades the RNA of RNA-DNA hybrids. The protein is Ribonuclease HII of Chromobacterium violaceum (strain ATCC 12472 / DSM 30191 / JCM 1249 / CCUG 213 / NBRC 12614 / NCIMB 9131 / NCTC 9757 / MK).